The following is a 295-amino-acid chain: Ribosomal protein L11 methyltransferase (295 aa).

S-adenosyl-L-methionine-binding residues include Thr-150, Gly-171, Asp-193, and Asn-232.

This sequence belongs to the methyltransferase superfamily. PrmA family.

The protein resides in the cytoplasm. It catalyses the reaction L-lysyl-[protein] + 3 S-adenosyl-L-methionine = N(6),N(6),N(6)-trimethyl-L-lysyl-[protein] + 3 S-adenosyl-L-homocysteine + 3 H(+). Methylates ribosomal protein L11. The sequence is that of Ribosomal protein L11 methyltransferase from Methylobacillus flagellatus (strain ATCC 51484 / DSM 6875 / VKM B-1610 / KT).